Reading from the N-terminus, the 70-residue chain is Cytochrome c oxidase subunit 8B, mitochondrial (70 aa).

Residues 1-24 (MPRLPPILRLLQAPEKYTVIPKAR) constitute a mitochondrion transit peptide. Residues 25 to 35 (ISSKPAKSPTS) are Mitochondrial matrix-facing. The helical transmembrane segment at 36-59 (AMDQAVGMSVIIAGFMVPAGWVLS) threads the bilayer. The Mitochondrial intermembrane portion of the chain corresponds to 60 to 70 (HLESYKRSSAA).

The protein belongs to the cytochrome c oxidase VIII family. In terms of assembly, component of the cytochrome c oxidase (complex IV, CIV), a multisubunit enzyme composed of 14 subunits. The complex is composed of a catalytic core of 3 subunits MT-CO1, MT-CO2 and MT-CO3, encoded in the mitochondrial DNA, and 11 supernumerary subunits COX4I, COX5A, COX5B, COX6A, COX6B, COX6C, COX7A, COX7B, COX7C, COX8 and NDUFA4, which are encoded in the nuclear genome. The complex exists as a monomer or a dimer and forms supercomplexes (SCs) in the inner mitochondrial membrane with NADH-ubiquinone oxidoreductase (complex I, CI) and ubiquinol-cytochrome c oxidoreductase (cytochrome b-c1 complex, complex III, CIII), resulting in different assemblies (supercomplex SCI(1)III(2)IV(1) and megacomplex MCI(2)III(2)IV(2)).

The protein resides in the mitochondrion inner membrane. It participates in energy metabolism; oxidative phosphorylation. Component of the cytochrome c oxidase, the last enzyme in the mitochondrial electron transport chain which drives oxidative phosphorylation. The respiratory chain contains 3 multisubunit complexes succinate dehydrogenase (complex II, CII), ubiquinol-cytochrome c oxidoreductase (cytochrome b-c1 complex, complex III, CIII) and cytochrome c oxidase (complex IV, CIV), that cooperate to transfer electrons derived from NADH and succinate to molecular oxygen, creating an electrochemical gradient over the inner membrane that drives transmembrane transport and the ATP synthase. Cytochrome c oxidase is the component of the respiratory chain that catalyzes the reduction of oxygen to water. Electrons originating from reduced cytochrome c in the intermembrane space (IMS) are transferred via the dinuclear copper A center (CU(A)) of subunit 2 and heme A of subunit 1 to the active site in subunit 1, a binuclear center (BNC) formed by heme A3 and copper B (CU(B)). The BNC reduces molecular oxygen to 2 water molecules using 4 electrons from cytochrome c in the IMS and 4 protons from the mitochondrial matrix. The sequence is that of Cytochrome c oxidase subunit 8B, mitochondrial (Cox8b) from Rattus norvegicus (Rat).